The sequence spans 509 residues: ATP synthase subunit alpha (509 aa).

169–176 (GDRQTGKT) contributes to the ATP binding site.

Belongs to the ATPase alpha/beta chains family. F-type ATPases have 2 components, CF(1) - the catalytic core - and CF(0) - the membrane proton channel. CF(1) has five subunits: alpha(3), beta(3), gamma(1), delta(1), epsilon(1). CF(0) has three main subunits: a(1), b(2) and c(9-12). The alpha and beta chains form an alternating ring which encloses part of the gamma chain. CF(1) is attached to CF(0) by a central stalk formed by the gamma and epsilon chains, while a peripheral stalk is formed by the delta and b chains.

Its subcellular location is the cell inner membrane. It carries out the reaction ATP + H2O + 4 H(+)(in) = ADP + phosphate + 5 H(+)(out). Functionally, produces ATP from ADP in the presence of a proton gradient across the membrane. The alpha chain is a regulatory subunit. This Methylobacterium nodulans (strain LMG 21967 / CNCM I-2342 / ORS 2060) protein is ATP synthase subunit alpha.